A 33-amino-acid polypeptide reads, in one-letter code: Brevinin-2Rk (33 aa).

Cys-27 and Cys-33 are joined by a disulfide.

As to expression, expressed by the skin glands.

The protein localises to the secreted. In terms of biological role, antimicrobial peptide. In Pelophylax ridibundus (Marsh frog), this protein is Brevinin-2Rk.